The sequence spans 78 residues: MNEYREYDEGLKRLSEIVEKLEDRELSLEENIKLYEEGMKLHKRLSSILKEQEGKMTLIKDNKEEDFQINMLLSDDNE.

Belongs to the XseB family. As to quaternary structure, heterooligomer composed of large and small subunits.

It is found in the cytoplasm. The catalysed reaction is Exonucleolytic cleavage in either 5'- to 3'- or 3'- to 5'-direction to yield nucleoside 5'-phosphates.. Functionally, bidirectionally degrades single-stranded DNA into large acid-insoluble oligonucleotides, which are then degraded further into small acid-soluble oligonucleotides. This is Exodeoxyribonuclease 7 small subunit from Finegoldia magna (strain ATCC 29328 / DSM 20472 / WAL 2508) (Peptostreptococcus magnus).